Consider the following 461-residue polypeptide: L-seryl-tRNA(Sec) selenium transferase (461 aa).

The residue at position 291 (K291) is an N6-(pyridoxal phosphate)lysine.

The protein belongs to the SelA family. The cofactor is pyridoxal 5'-phosphate.

It localises to the cytoplasm. The catalysed reaction is L-seryl-tRNA(Sec) + selenophosphate + H(+) = L-selenocysteinyl-tRNA(Sec) + phosphate. It participates in aminoacyl-tRNA biosynthesis; selenocysteinyl-tRNA(Sec) biosynthesis; selenocysteinyl-tRNA(Sec) from L-seryl-tRNA(Sec) (bacterial route): step 1/1. Its function is as follows. Converts seryl-tRNA(Sec) to selenocysteinyl-tRNA(Sec) required for selenoprotein biosynthesis. This is L-seryl-tRNA(Sec) selenium transferase from Caldanaerobacter subterraneus subsp. tengcongensis (strain DSM 15242 / JCM 11007 / NBRC 100824 / MB4) (Thermoanaerobacter tengcongensis).